The following is a 184-amino-acid chain: ATP synthase subunit b, chloroplastic (184 aa).

A helical membrane pass occupies residues 27 to 49 (LATNPINLSVVLGVLIFFGKGVL).

It belongs to the ATPase B chain family. F-type ATPases have 2 components, F(1) - the catalytic core - and F(0) - the membrane proton channel. F(1) has five subunits: alpha(3), beta(3), gamma(1), delta(1), epsilon(1). F(0) has four main subunits: a(1), b(1), b'(1) and c(10-14). The alpha and beta chains form an alternating ring which encloses part of the gamma chain. F(1) is attached to F(0) by a central stalk formed by the gamma and epsilon chains, while a peripheral stalk is formed by the delta, b and b' chains.

It localises to the plastid. The protein localises to the chloroplast thylakoid membrane. In terms of biological role, f(1)F(0) ATP synthase produces ATP from ADP in the presence of a proton or sodium gradient. F-type ATPases consist of two structural domains, F(1) containing the extramembraneous catalytic core and F(0) containing the membrane proton channel, linked together by a central stalk and a peripheral stalk. During catalysis, ATP synthesis in the catalytic domain of F(1) is coupled via a rotary mechanism of the central stalk subunits to proton translocation. Functionally, component of the F(0) channel, it forms part of the peripheral stalk, linking F(1) to F(0). This chain is ATP synthase subunit b, chloroplastic, found in Ceratophyllum demersum (Rigid hornwort).